Reading from the N-terminus, the 437-residue chain is ATP-dependent protease ATPase subunit HslU (437 aa).

ATP contacts are provided by residues V18, 60 to 65, D250, E315, and R387; that span reads GVGKTE.

It belongs to the ClpX chaperone family. HslU subfamily. In terms of assembly, a double ring-shaped homohexamer of HslV is capped on each side by a ring-shaped HslU homohexamer. The assembly of the HslU/HslV complex is dependent on binding of ATP.

It localises to the cytoplasm. Its function is as follows. ATPase subunit of a proteasome-like degradation complex; this subunit has chaperone activity. The binding of ATP and its subsequent hydrolysis by HslU are essential for unfolding of protein substrates subsequently hydrolyzed by HslV. HslU recognizes the N-terminal part of its protein substrates and unfolds these before they are guided to HslV for hydrolysis. This chain is ATP-dependent protease ATPase subunit HslU, found in Desulfovibrio desulfuricans (strain ATCC 27774 / DSM 6949 / MB).